A 68-amino-acid polypeptide reads, in one-letter code: Peptide Hp1412 (68 aa).

The N-terminal stretch at 1–23 is a signal peptide; sequence MKTHFAIFLITLFLFQMFSQSDA. C36 carries the cysteine amide modification. Residues 40–68 constitute a propeptide that is removed on maturation; the sequence is GLSDLYDLDEMFDGEISQADIDFLKELMR.

The protein belongs to the non-disulfide-bridged peptide (NDBP) superfamily. Short antimicrobial peptide (group 4) family. In terms of tissue distribution, expressed by the venom gland.

Its subcellular location is the secreted. It localises to the target cell membrane. Amphipathic peptide with antimicrobial activity. The chain is Peptide Hp1412 from Heterometrus petersii (Asian forest scorpion).